Reading from the N-terminus, the 180-residue chain is Shikimate kinase (180 aa).

An ATP-binding site is contributed by 14 to 19 (GAGKSS). Ser18 lines the Mg(2+) pocket. Substrate-binding residues include Asp36, Arg60, and Gly82. Arg120 serves as a coordination point for ATP. Arg139 is a substrate binding site.

Belongs to the shikimate kinase family. In terms of assembly, monomer. Requires Mg(2+) as cofactor.

Its subcellular location is the cytoplasm. The catalysed reaction is shikimate + ATP = 3-phosphoshikimate + ADP + H(+). It participates in metabolic intermediate biosynthesis; chorismate biosynthesis; chorismate from D-erythrose 4-phosphate and phosphoenolpyruvate: step 5/7. Functionally, catalyzes the specific phosphorylation of the 3-hydroxyl group of shikimic acid using ATP as a cosubstrate. This Xylella fastidiosa (strain M12) protein is Shikimate kinase.